A 345-amino-acid chain; its full sequence is N-acetyl-gamma-glutamyl-phosphate reductase (345 aa).

Residue cysteine 149 is part of the active site.

This sequence belongs to the NAGSA dehydrogenase family. Type 1 subfamily.

The protein resides in the cytoplasm. It catalyses the reaction N-acetyl-L-glutamate 5-semialdehyde + phosphate + NADP(+) = N-acetyl-L-glutamyl 5-phosphate + NADPH + H(+). It functions in the pathway amino-acid biosynthesis; L-arginine biosynthesis; N(2)-acetyl-L-ornithine from L-glutamate: step 3/4. Functionally, catalyzes the NADPH-dependent reduction of N-acetyl-5-glutamyl phosphate to yield N-acetyl-L-glutamate 5-semialdehyde. The polypeptide is N-acetyl-gamma-glutamyl-phosphate reductase (Halalkalibacterium halodurans (strain ATCC BAA-125 / DSM 18197 / FERM 7344 / JCM 9153 / C-125) (Bacillus halodurans)).